Here is a 300-residue protein sequence, read N- to C-terminus: 17-beta-hydroxysteroid dehydrogenase 13 (300 aa).

An N-terminal signal peptide occupies residues 1–19 (MNLILELLLLVGIIIYSYL). Ser33 is modified (phosphoserine). Residue 40–67 (LITGAGHGIGRLTAYEFAKQKSRLVLWD) participates in NAD(+) binding. A Phosphoserine modification is found at Ser69. Residue Lys79 is modified to N6-acetyllysine. Ser172 provides a ligand contact to substrate. Catalysis depends on Tyr185, which acts as the Proton acceptor. Residue Lys189 coordinates NAD(+).

It belongs to the short-chain dehydrogenases/reductases (SDR) family.

The protein localises to the lipid droplet. It localises to the endoplasmic reticulum. It catalyses the reaction 17beta-estradiol + NAD(+) = estrone + NADH + H(+). It carries out the reaction all-trans-retinol + NAD(+) = all-trans-retinal + NADH + H(+). The catalysed reaction is all-trans-retinal + NAD(+) + H2O = all-trans-retinoate + NADH + 2 H(+). In terms of biological role, plays a pivotal role in hepatic lipid metabolism. In vitro, it catalyzes the oxidation of a variety of lipid substrates, including 17beta-estradiol, retinol, retinal, and leukotriene B4. The protein is 17-beta-hydroxysteroid dehydrogenase 13 (Hsd17b13) of Rattus norvegicus (Rat).